The following is a 260-amino-acid chain: 5'-nucleotidase SurE (260 aa).

Positions 8, 9, 43, and 96 each coordinate a divalent metal cation.

Belongs to the SurE nucleotidase family. A divalent metal cation serves as cofactor.

The protein localises to the cytoplasm. It catalyses the reaction a ribonucleoside 5'-phosphate + H2O = a ribonucleoside + phosphate. Its function is as follows. Nucleotidase that shows phosphatase activity on nucleoside 5'-monophosphates. This Ruegeria pomeroyi (strain ATCC 700808 / DSM 15171 / DSS-3) (Silicibacter pomeroyi) protein is 5'-nucleotidase SurE.